Here is a 396-residue protein sequence, read N- to C-terminus: NADH-quinone oxidoreductase subunit D 2 (396 aa).

The protein belongs to the complex I 49 kDa subunit family. As to quaternary structure, NDH-1 is composed of 14 different subunits. Subunits NuoB, C, D, E, F, and G constitute the peripheral sector of the complex.

It is found in the cell inner membrane. It catalyses the reaction a quinone + NADH + 5 H(+)(in) = a quinol + NAD(+) + 4 H(+)(out). Functionally, NDH-1 shuttles electrons from NADH, via FMN and iron-sulfur (Fe-S) centers, to quinones in the respiratory chain. The immediate electron acceptor for the enzyme in this species is believed to be ubiquinone. Couples the redox reaction to proton translocation (for every two electrons transferred, four hydrogen ions are translocated across the cytoplasmic membrane), and thus conserves the redox energy in a proton gradient. The sequence is that of NADH-quinone oxidoreductase subunit D 2 from Beijerinckia indica subsp. indica (strain ATCC 9039 / DSM 1715 / NCIMB 8712).